Here is a 312-residue protein sequence, read N- to C-terminus: MHSFKLLLALIVAICTSCDAVPRGSLSDESNFKSYPVAQYEAANHRLLRAKDGKVRADEERLSSNPDSMLTRIKSFVNPGPFHELVRTATAIAERLKETVHSTLDHWLTIQRFNHLLGHCDHDSMDSAIVRGFHPSEFRVWLDLKSPLATEVVDSLDEWPKSTQLQSLLKFIKHYHSLLLPPPNHWAKVRASINPSHASSKPLFHDVYGIKEALEEMDHIIDQDLSVATMLEQKVSPLLYKVALEARELKTGKRIDRSKLNRFIKGYMAQYPSLDKFESMVNGYAPPGKFRKIPTFKGLDDDVINPPKYLNP.

The N-terminal stretch at Met-1–Ala-20 is a signal peptide. The short motif at Arg-46–Arg-61 is the RxLR-dEER element.

The protein belongs to the RxLR effector family.

It is found in the secreted. The protein resides in the host nucleus. Its function is as follows. Secreted effector that completely suppresses the host cell death induced by cell death-inducing proteins. This is Secreted RxLR effector protein 14 from Plasmopara viticola (Downy mildew of grapevine).